The primary structure comprises 236 residues: Lectin (236 aa).

N118 is a glycosylation site (N-linked (GlcNAc...) asparagine).

Belongs to the leguminous lectin family. In terms of assembly, homodimer of noncovalently associated chains.

D-mannose and D-glucose specific lectin. This chain is Lectin, found in Onobrychis viciifolia (Common sainfoin).